Consider the following 312-residue polypeptide: Olfactory receptor 6C1 (312 aa).

At 1–23 the chain is on the extracellular side; the sequence is MRNHTEITEFILLGLTDDPNFQV. Asn-3 carries an N-linked (GlcNAc...) asparagine glycan. Residues 24–44 form a helical membrane-spanning segment; it reads VIFVFLLITYMLSITGNLTLI. Residues 45 to 52 are Cytoplasmic-facing; sequence TITLLDSH. Residues 53–73 form a helical membrane-spanning segment; the sequence is LQTPMYFFLRNFSILEISFTT. Residues 74 to 97 are Extracellular-facing; that stretch reads VSIPKFLGNIISGDKTISFNNCIV. Cys-95 and Cys-187 are oxidised to a cystine. The chain crosses the membrane as a helical span at residues 98-118; it reads QLFFFILLGVTEFYLLAAMSY. Over 119–137 the chain is Cytoplasmic; that stretch reads DRYVAICKPLHCLSIMNRR. Residues 138–158 traverse the membrane as a helical segment; it reads VCTLLVFTSWLVSFLIIFPAL. Residues 159-195 lie on the Extracellular side of the membrane; it reads MLLLKLHYCRSNIIDHFTCDYFPLLQLACSDTKFLEV. A helical membrane pass occupies residues 196–215; sequence MGFSCAAFTLMFTLALIFLS. At 216 to 235 the chain is on the cytoplasmic side; the sequence is YIYIIRTILRIPSTSQRTKA. A helical membrane pass occupies residues 236-256; it reads FSTCSSHMVVVSISYGSCIFM. Residues 257–269 lie on the Extracellular side of the membrane; that stretch reads YIKPSAKDRVSLS. A helical transmembrane segment spans residues 270 to 290; sequence KGVAILNTSVAPMMNPFIYSL. Over 291–312 the chain is Cytoplasmic; sequence RNQQVKQAFINMARKTVFFTST.

It belongs to the G-protein coupled receptor 1 family.

The protein resides in the cell membrane. Odorant receptor. The sequence is that of Olfactory receptor 6C1 (OR6C1) from Homo sapiens (Human).